A 385-amino-acid chain; its full sequence is Probable endopeptidase MT2245 (385 aa).

A compositionally biased stretch (pro residues) spans 235–257 (AALPPGAPPGDGPAPGVAPPPGG). The interval 235-268 (AALPPGAPPGDGPAPGVAPPPGGMPGLPFVQPDG) is disordered. The region spanning 270–385 (GGDRTAVVQA…SGPIYDARRY (116 aa)) is the NlpC/P60 domain. The active-site Nucleophile is the C300. H348 functions as the Proton acceptor in the catalytic mechanism. H360 is a catalytic residue.

The protein belongs to the peptidase C40 family.

The polypeptide is Probable endopeptidase MT2245 (Mycobacterium tuberculosis (strain CDC 1551 / Oshkosh)).